Consider the following 538-residue polypeptide: Ubiquitin domain-containing protein DSK2a (538 aa).

The region spanning 18 to 93 (VAVNVRCSNG…VHMVRGFVPS (76 aa)) is the Ubiquitin-like domain. Residues 95-120 (PSAPAANAGNQTTAPQAVGSNDSSNL) are disordered. A compositionally biased stretch (polar residues) spans 102–119 (AGNQTTAPQAVGSNDSSN). STI1 domains follow at residues 138–179 (GNAM…QNLM) and 192–231 (NPQM…MREM). A disordered region spans residues 289–316 (QGVTTQGSDTSNNISAPNAETGTPNANP). 2 STI1 domains span residues 357–394 (SPLG…MNQL) and 398–433 (NPQL…MQQM). The region spanning 491–535 (PPEERFATQLQQLQEMGFYDRAENIRALLATNGNVNAAVERLLGS) is the UBA domain.

As to quaternary structure, interacts with 'Lys-48'-linked polyubiquitin chains via its UBA domain. Interacts with RPN10 and RPN13. Interacts with PEX2 and PEX12. In terms of tissue distribution, ubiquitous with a strong expression level in inflorescence.

It localises to the nucleus. It is found in the cytoplasm. Functionally, binds and presumably selects ubiquitin-conjugates for destruction. Prefers multiubiquitin chains rather than single ubiquitins, with a binding affinity for 'Lys-48'-linked ubiquitin chains. Acts as a ubiquitin receptor that associates with the 26S proteasomal docking subunit RPN10 for the indirect recognition of ubiquitinated substrates of ubiquitin/26S proteasome-mediated proteolysis (UPP). The polypeptide is Ubiquitin domain-containing protein DSK2a (DSK2A) (Arabidopsis thaliana (Mouse-ear cress)).